The following is a 436-amino-acid chain: D-amino acid dehydrogenase (436 aa).

3-17 (IVVLGAGVVGVTSAY) is an FAD binding site.

It belongs to the DadA oxidoreductase family. It depends on FAD as a cofactor.

It carries out the reaction a D-alpha-amino acid + A + H2O = a 2-oxocarboxylate + AH2 + NH4(+). Its pathway is amino-acid degradation; D-alanine degradation; NH(3) and pyruvate from D-alanine: step 1/1. Its function is as follows. Oxidative deamination of D-amino acids. The chain is D-amino acid dehydrogenase from Cereibacter sphaeroides (strain ATCC 17023 / DSM 158 / JCM 6121 / CCUG 31486 / LMG 2827 / NBRC 12203 / NCIMB 8253 / ATH 2.4.1.) (Rhodobacter sphaeroides).